A 952-amino-acid polypeptide reads, in one-letter code: Ubiquitin carboxyl-terminal hydrolase 15 (952 aa).

Alanine 2 carries the post-translational modification N-acetylalanine. The tract at residues 2–223 (AEGGAADLDT…KNEDGTWPRG (222 aa)) is mediates interaction with SART3. In terms of domain architecture, DUSP spans 7-118 (ADLDTQRSDI…GQEPIARKVV (112 aa)). The USP domain maps to 260–904 (CGLSNLGNTC…AAYVLFYQRQ (645 aa)). The Nucleophile role is filled by cysteine 269. The residue at position 573 (threonine 573) is a Phosphothreonine. The tract at residues 597–665 (ETDGPLRCCE…GGDNDSENGL (69 aa)) is disordered. A compositionally biased stretch (acidic residues) spans 627 to 644 (METDEPDDESSQDQELPS). Catalysis depends on histidine 862, which acts as the Proton acceptor. The interval 923–952 (SAATGVPLESDEDSNDNDNDLENENCMHTN) is disordered. Residues 931-945 (ESDEDSNDNDNDLEN) show a composition bias toward acidic residues. 2 positions are modified to phosphoserine: serine 932 and serine 936.

It belongs to the peptidase C19 family. A homodimer structure has been reported; however it is unclear whether the protein form a homodimer in vivo. Identified in a complex with the COP9 signalosome complex (CSN). Interacts with SMAD1, SMAD2 and SMAD3; the interaction is direct. Forms a complex with SMURF2 and SMAD7. Interacts with TGFBR1. Interacts with SART3; the interaction is direct. May interact with RNF20 and RNF40. May interact with PRKN. Interacts with INCA1. Phosphorylated. Phosphorylation protects against ubiquitination and subsequent degradation by the proteasome. In terms of processing, ubiquitinated, leading to degradation by the proteasome. As to expression, highly expressed in testis and spleen, and at lower level in other tissues.

Its subcellular location is the cytoplasm. The protein resides in the nucleus. The protein localises to the mitochondrion. It catalyses the reaction Thiol-dependent hydrolysis of ester, thioester, amide, peptide and isopeptide bonds formed by the C-terminal Gly of ubiquitin (a 76-residue protein attached to proteins as an intracellular targeting signal).. Functionally, hydrolase that removes conjugated ubiquitin from target proteins and regulates various pathways such as the TGF-beta receptor signaling, NF-kappa-B and RNF41/NRDP1-PRKN pathways. Acts as a key regulator of TGF-beta receptor signaling pathway, but the precise mechanism is still unclear: according to a report, acts by promoting deubiquitination of monoubiquitinated R-SMADs (SMAD1, SMAD2 and/or SMAD3), thereby alleviating inhibition of R-SMADs and promoting activation of TGF-beta target genes. According to another reports, regulates the TGF-beta receptor signaling pathway by mediating deubiquitination and stabilization of TGFBR1, leading to an enhanced TGF-beta signal. Able to mediate deubiquitination of monoubiquitinated substrates, 'Lys-27'-, 'Lys-48'- and 'Lys-63'-linked polyubiquitin chains. May also regulate gene expression and/or DNA repair through the deubiquitination of histone H2B. Acts as an inhibitor of mitophagy by counteracting the action of parkin (PRKN): hydrolyzes cleavage of 'Lys-48'- and 'Lys-63'-linked polyubiquitin chains attached by parkin on target proteins such as MFN2, thereby reducing parkin's ability to drive mitophagy. Acts as an associated component of COP9 signalosome complex (CSN) and regulates different pathways via this association: regulates NF-kappa-B by mediating deubiquitination of NFKBIA and deubiquitinates substrates bound to VCP. Involved in endosome organization by mediating deubiquitination of SQSTM1: ubiquitinated SQSTM1 forms a molecular bridge that restrains cognate vesicles in the perinuclear region and its deubiquitination releases target vesicles for fast transport into the cell periphery. Acts as a negative regulator of antifungal immunity by mediating 'Lys-27'-linked deubiquitination of CARD9, thereby inactivating CARD9. In Rattus norvegicus (Rat), this protein is Ubiquitin carboxyl-terminal hydrolase 15 (Usp15).